The sequence spans 527 residues: Putative zinc finger CCCH domain-containing protein 64 (527 aa).

Residues 103–127 are disordered; the sequence is GQLRSTQTTSKRKAASRKGQREQRV. A C3H1-type zinc finger spans residues 213 to 241; sequence RPGEPFCRYYMKFGECKHMTFCKYNHPKD.

This chain is Putative zinc finger CCCH domain-containing protein 64, found in Oryza sativa subsp. japonica (Rice).